The primary structure comprises 564 residues: Pestheic acid cluster transcriptional regulator 3 (564 aa).

The zn(2)-C6 fungal-type DNA-binding region spans cysteine 11–cysteine 38. Residues arginine 71–serine 123 are disordered. The segment covering serine 97–serine 113 has biased composition (polar residues).

It localises to the nucleus. Transcription factor that, with ptaR1 and ptaR2, coregulates the expression of the gene cluster that mediates the biosynthesis of pestheic acid, a diphenyl ether which is a biosynthetic precursor of the unique chloropupukeananes. This Pestalotiopsis fici (strain W106-1 / CGMCC3.15140) protein is Pestheic acid cluster transcriptional regulator 3.